The sequence spans 561 residues: Putative transport protein YbjL (561 aa).

Helical transmembrane passes span 8 to 28, 32 to 52, 66 to 86, 94 to 114, and 158 to 178; these read LLNGNYILLLFVVLALGLCLG, LGSVQLGNSIGVLVVSLLLGQ, FMLFIFCVGVEAGPNFFSIFF, MLALVMVGSALLIALGLGKLF, and NLSLGYALTYLIGLVSLIVGA. RCK C-terminal domains are found at residues 200–288 and 292–373; these read RGLD…SFRN and VFDR…RIGF. A run of 5 helical transmembrane segments spans residues 383–403, 406–426, 447–467, 475–495, and 540–560; these read LLAFCAFFIIGLMIGMITFQF, FSFGIGNAAGLLFAGIMLGFL, FGLMVFMAGVGLSAGSGISNG, MLIAGLVVSLVPVVICFLFGA, and AIANVLLTLAGTLIVIIWPGL.

It belongs to the AAE transporter (TC 2.A.81) family. YbjL subfamily.

The protein resides in the cell membrane. The protein is Putative transport protein YbjL of Salmonella agona (strain SL483).